Consider the following 361-residue polypeptide: Holliday junction branch migration complex subunit RuvB (361 aa).

The segment covering 1 to 12 (MNWDETGPETDE) has biased composition (acidic residues). The disordered stretch occupies residues 1–21 (MNWDETGPETDEPTGPVLDDR). The interval 13-199 (PTGPVLDDRL…FGFTGHMEFY (187 aa)) is large ATPase domain (RuvB-L). Residues Leu-38, Arg-39, Gly-80, Lys-83, Thr-84, Thr-85, 146–148 (EDF), Arg-189, Tyr-199, and Arg-236 each bind ATP. Residue Thr-84 coordinates Mg(2+). A small ATPAse domain (RuvB-S) region spans residues 200–270 (APAELERVLH…IAMAALKVYE (71 aa)). Residues 273-361 (ARGLDRLDRA…AKGQQGLFGA (89 aa)) are head domain (RuvB-H). DNA-binding residues include Arg-309, Arg-328, and Arg-333.

It belongs to the RuvB family. Homohexamer. Forms an RuvA(8)-RuvB(12)-Holliday junction (HJ) complex. HJ DNA is sandwiched between 2 RuvA tetramers; dsDNA enters through RuvA and exits via RuvB. An RuvB hexamer assembles on each DNA strand where it exits the tetramer. Each RuvB hexamer is contacted by two RuvA subunits (via domain III) on 2 adjacent RuvB subunits; this complex drives branch migration. In the full resolvosome a probable DNA-RuvA(4)-RuvB(12)-RuvC(2) complex forms which resolves the HJ.

The protein resides in the cytoplasm. It catalyses the reaction ATP + H2O = ADP + phosphate + H(+). Functionally, the RuvA-RuvB-RuvC complex processes Holliday junction (HJ) DNA during genetic recombination and DNA repair, while the RuvA-RuvB complex plays an important role in the rescue of blocked DNA replication forks via replication fork reversal (RFR). RuvA specifically binds to HJ cruciform DNA, conferring on it an open structure. The RuvB hexamer acts as an ATP-dependent pump, pulling dsDNA into and through the RuvAB complex. RuvB forms 2 homohexamers on either side of HJ DNA bound by 1 or 2 RuvA tetramers; 4 subunits per hexamer contact DNA at a time. Coordinated motions by a converter formed by DNA-disengaged RuvB subunits stimulates ATP hydrolysis and nucleotide exchange. Immobilization of the converter enables RuvB to convert the ATP-contained energy into a lever motion, pulling 2 nucleotides of DNA out of the RuvA tetramer per ATP hydrolyzed, thus driving DNA branch migration. The RuvB motors rotate together with the DNA substrate, which together with the progressing nucleotide cycle form the mechanistic basis for DNA recombination by continuous HJ branch migration. Branch migration allows RuvC to scan DNA until it finds its consensus sequence, where it cleaves and resolves cruciform DNA. This is Holliday junction branch migration complex subunit RuvB from Streptomyces griseus subsp. griseus (strain JCM 4626 / CBS 651.72 / NBRC 13350 / KCC S-0626 / ISP 5235).